The sequence spans 283 residues: Thymidylate synthase (283 aa).

R22 serves as a coordination point for dUMP. Residue C160 is the Nucleophile of the active site. DUMP is bound by residues 180–183 (RSCD), N191, and 221–223 (HIY). Position 183 (D183) interacts with (6R)-5,10-methylene-5,6,7,8-tetrahydrofolate. Position 282 (S282) interacts with (6R)-5,10-methylene-5,6,7,8-tetrahydrofolate.

The protein belongs to the thymidylate synthase family. Bacterial-type ThyA subfamily. Homodimer.

The protein resides in the cytoplasm. It carries out the reaction dUMP + (6R)-5,10-methylene-5,6,7,8-tetrahydrofolate = 7,8-dihydrofolate + dTMP. It functions in the pathway pyrimidine metabolism; dTTP biosynthesis. Functionally, catalyzes the reductive methylation of 2'-deoxyuridine-5'-monophosphate (dUMP) to 2'-deoxythymidine-5'-monophosphate (dTMP) while utilizing 5,10-methylenetetrahydrofolate (mTHF) as the methyl donor and reductant in the reaction, yielding dihydrofolate (DHF) as a by-product. This enzymatic reaction provides an intracellular de novo source of dTMP, an essential precursor for DNA biosynthesis. The chain is Thymidylate synthase from Tolumonas auensis (strain DSM 9187 / NBRC 110442 / TA 4).